Here is a 395-residue protein sequence, read N- to C-terminus: Ribosomal RNA small subunit methyltransferase H (395 aa).

Residues 101–103, aspartate 120, tyrosine 147, aspartate 171, and glutamine 178 contribute to the S-adenosyl-L-methionine site; that span reads GGH.

It belongs to the methyltransferase superfamily. RsmH family.

The protein resides in the cytoplasm. It catalyses the reaction cytidine(1402) in 16S rRNA + S-adenosyl-L-methionine = N(4)-methylcytidine(1402) in 16S rRNA + S-adenosyl-L-homocysteine + H(+). In terms of biological role, specifically methylates the N4 position of cytidine in position 1402 (C1402) of 16S rRNA. The protein is Ribosomal RNA small subunit methyltransferase H of Mycobacterium ulcerans (strain Agy99).